The sequence spans 301 residues: Glycine--tRNA ligase alpha subunit (301 aa).

The protein belongs to the class-II aminoacyl-tRNA synthetase family. In terms of assembly, tetramer of two alpha and two beta subunits.

The protein resides in the cytoplasm. The enzyme catalyses tRNA(Gly) + glycine + ATP = glycyl-tRNA(Gly) + AMP + diphosphate. The chain is Glycine--tRNA ligase alpha subunit from Shewanella piezotolerans (strain WP3 / JCM 13877).